A 176-amino-acid polypeptide reads, in one-letter code: B9 domain-containing protein 2 (176 aa).

One can recognise a C2 B9-type domain in the interval Ala-2–Thr-118.

Belongs to the B9D family. Part of the tectonic-like complex (also named B9 complex).

It is found in the cytoplasm. Its subcellular location is the cytoskeleton. The protein localises to the cilium basal body. It localises to the cilium axoneme. In terms of biological role, component of the tectonic-like complex, a complex localized at the transition zone of primary cilia and acting as a barrier that prevents diffusion of transmembrane proteins between the cilia and plasma membranes. In Xenopus laevis (African clawed frog), this protein is B9 domain-containing protein 2 (b9d2).